A 205-amino-acid polypeptide reads, in one-letter code: Meiotic nuclear division protein 1 homolog (205 aa).

N-acetylserine is present on serine 2. A coiled-coil region spans residues 84 to 173 (HKLEVLESQL…EAANRWTDNI (90 aa)).

This sequence belongs to the MND1 family. As to quaternary structure, heterodimer with PSMC3IP/HOP2. MND1-PSMC3IP interacts with DMC1 and RAD51 and binds preferentially to dsDNA.

The protein localises to the nucleus. In terms of biological role, required for proper homologous chromosome pairing and efficient cross-over and intragenic recombination during meiosis. Stimulates both DMC1- and RAD51-mediated homologous strand assimilation, which is required for the resolution of meiotic double-strand breaks. The polypeptide is Meiotic nuclear division protein 1 homolog (Homo sapiens (Human)).